We begin with the raw amino-acid sequence, 371 residues long: tRNA (guanine(26)-N(2))-dimethyltransferase (371 aa).

The region spanning 1-370 (MDVSEGGVTV…GGLAEVEAAV (370 aa)) is the Trm1 methyltransferase domain. S-adenosyl-L-methionine-binding residues include Arg36, Arg66, Asp81, Asp107, and Ala108. Positions 238, 241, 258, and 261 each coordinate Zn(2+).

The protein belongs to the class I-like SAM-binding methyltransferase superfamily. Trm1 family.

It carries out the reaction guanosine(26) in tRNA + 2 S-adenosyl-L-methionine = N(2)-dimethylguanosine(26) in tRNA + 2 S-adenosyl-L-homocysteine + 2 H(+). Functionally, dimethylates a single guanine residue at position 26 of a number of tRNAs using S-adenosyl-L-methionine as donor of the methyl groups. The sequence is that of tRNA (guanine(26)-N(2))-dimethyltransferase from Halobacterium salinarum (strain ATCC 700922 / JCM 11081 / NRC-1) (Halobacterium halobium).